We begin with the raw amino-acid sequence, 181 residues long: Ribosome maturation factor RimP (181 aa).

It belongs to the RimP family.

Its subcellular location is the cytoplasm. In terms of biological role, required for maturation of 30S ribosomal subunits. The protein is Ribosome maturation factor RimP of Sphingopyxis alaskensis (strain DSM 13593 / LMG 18877 / RB2256) (Sphingomonas alaskensis).